Reading from the N-terminus, the 181-residue chain is dTTP/UTP pyrophosphatase (181 aa).

Catalysis depends on aspartate 67, which acts as the Proton acceptor.

Belongs to the Maf family. YhdE subfamily. A divalent metal cation serves as cofactor.

Its subcellular location is the cytoplasm. The catalysed reaction is dTTP + H2O = dTMP + diphosphate + H(+). The enzyme catalyses UTP + H2O = UMP + diphosphate + H(+). Nucleoside triphosphate pyrophosphatase that hydrolyzes dTTP and UTP. May have a dual role in cell division arrest and in preventing the incorporation of modified nucleotides into cellular nucleic acids. The polypeptide is dTTP/UTP pyrophosphatase (Latilactobacillus sakei subsp. sakei (strain 23K) (Lactobacillus sakei subsp. sakei)).